A 121-amino-acid chain; its full sequence is Large ribosomal subunit protein uL18 (121 aa).

The protein belongs to the universal ribosomal protein uL18 family. Part of the 50S ribosomal subunit; part of the 5S rRNA/L5/L18/L25 subcomplex. Contacts the 5S and 23S rRNAs.

Functionally, this is one of the proteins that bind and probably mediate the attachment of the 5S RNA into the large ribosomal subunit, where it forms part of the central protuberance. This chain is Large ribosomal subunit protein uL18, found in Ehrlichia chaffeensis (strain ATCC CRL-10679 / Arkansas).